The following is a 446-amino-acid chain: UDP-N-acetylmuramate--L-alanine ligase (446 aa).

122 to 128 (GTHGKTT) contacts ATP.

The protein belongs to the MurCDEF family.

It is found in the cytoplasm. The enzyme catalyses UDP-N-acetyl-alpha-D-muramate + L-alanine + ATP = UDP-N-acetyl-alpha-D-muramoyl-L-alanine + ADP + phosphate + H(+). The protein operates within cell wall biogenesis; peptidoglycan biosynthesis. In terms of biological role, cell wall formation. The sequence is that of UDP-N-acetylmuramate--L-alanine ligase from Nocardioides sp. (strain ATCC BAA-499 / JS614).